Reading from the N-terminus, the 645-residue chain is 1-deoxy-D-xylulose-5-phosphate synthase (645 aa).

Thiamine diphosphate is bound by residues H83 and 124-126 (GHS). D155 contributes to the Mg(2+) binding site. Residues 156-157 (GS), N184, Y295, and E376 each bind thiamine diphosphate. Mg(2+) is bound at residue N184.

It belongs to the transketolase family. DXPS subfamily. In terms of assembly, homodimer. It depends on Mg(2+) as a cofactor. The cofactor is thiamine diphosphate.

It catalyses the reaction D-glyceraldehyde 3-phosphate + pyruvate + H(+) = 1-deoxy-D-xylulose 5-phosphate + CO2. It functions in the pathway metabolic intermediate biosynthesis; 1-deoxy-D-xylulose 5-phosphate biosynthesis; 1-deoxy-D-xylulose 5-phosphate from D-glyceraldehyde 3-phosphate and pyruvate: step 1/1. In terms of biological role, catalyzes the acyloin condensation reaction between C atoms 2 and 3 of pyruvate and glyceraldehyde 3-phosphate to yield 1-deoxy-D-xylulose-5-phosphate (DXP). The sequence is that of 1-deoxy-D-xylulose-5-phosphate synthase from Desulfotalea psychrophila (strain LSv54 / DSM 12343).